The chain runs to 574 residues: Proline--tRNA ligase (574 aa).

This sequence belongs to the class-II aminoacyl-tRNA synthetase family. ProS type 1 subfamily. In terms of assembly, homodimer.

The protein localises to the cytoplasm. The catalysed reaction is tRNA(Pro) + L-proline + ATP = L-prolyl-tRNA(Pro) + AMP + diphosphate. In terms of biological role, catalyzes the attachment of proline to tRNA(Pro) in a two-step reaction: proline is first activated by ATP to form Pro-AMP and then transferred to the acceptor end of tRNA(Pro). As ProRS can inadvertently accommodate and process non-cognate amino acids such as alanine and cysteine, to avoid such errors it has two additional distinct editing activities against alanine. One activity is designated as 'pretransfer' editing and involves the tRNA(Pro)-independent hydrolysis of activated Ala-AMP. The other activity is designated 'posttransfer' editing and involves deacylation of mischarged Ala-tRNA(Pro). The misacylated Cys-tRNA(Pro) is not edited by ProRS. This Nitratidesulfovibrio vulgaris (strain ATCC 29579 / DSM 644 / CCUG 34227 / NCIMB 8303 / VKM B-1760 / Hildenborough) (Desulfovibrio vulgaris) protein is Proline--tRNA ligase.